Consider the following 63-residue polypeptide: Small ribosomal subunit protein eS30B (63 aa).

Residues 1–35 (MAKVHGSLARAGKVKSQTPKVEKTEKPKKPKGRAY) form a disordered region. A Phosphoserine modification is found at S16. T48 is modified (phosphothreonine).

The protein belongs to the eukaryotic ribosomal protein eS30 family. As to quaternary structure, component of the small ribosomal subunit (SSU). Mature yeast ribosomes consist of a small (40S) and a large (60S) subunit. The 40S small subunit contains 1 molecule of ribosomal RNA (18S rRNA) and 33 different proteins (encoded by 57 genes). The large 60S subunit contains 3 rRNA molecules (25S, 5.8S and 5S rRNA) and 46 different proteins (encoded by 81 genes).

It localises to the cytoplasm. Component of the ribosome, a large ribonucleoprotein complex responsible for the synthesis of proteins in the cell. The small ribosomal subunit (SSU) binds messenger RNAs (mRNAs) and translates the encoded message by selecting cognate aminoacyl-transfer RNA (tRNA) molecules. The large subunit (LSU) contains the ribosomal catalytic site termed the peptidyl transferase center (PTC), which catalyzes the formation of peptide bonds, thereby polymerizing the amino acids delivered by tRNAs into a polypeptide chain. The nascent polypeptides leave the ribosome through a tunnel in the LSU and interact with protein factors that function in enzymatic processing, targeting, and the membrane insertion of nascent chains at the exit of the ribosomal tunnel. In Saccharomyces cerevisiae (strain ATCC 204508 / S288c) (Baker's yeast), this protein is Small ribosomal subunit protein eS30B.